Consider the following 131-residue polypeptide: MREIIQGLLFVALGSVFGGMARFWLSGMVARRIGETFPWGTLTVNVSGAFAIGVFGALAASGHGVFSTPGPWLFAVTGFLGCYTTVSSFALQTLALARDGESLRAISNVTFSLVFCLIAVALGFAAARVLA.

The next 4 helical transmembrane spans lie at 4 to 24, 46 to 66, 71 to 91, and 105 to 125; these read IIQG…ARFW, VSGA…HGVF, PWLF…SFAL, and AISN…LGFA. The Na(+) site is built by Gly-81 and Thr-84.

This sequence belongs to the fluoride channel Fluc/FEX (TC 1.A.43) family.

It is found in the cell inner membrane. The catalysed reaction is fluoride(in) = fluoride(out). Na(+) is not transported, but it plays an essential structural role and its presence is essential for fluoride channel function. In terms of biological role, fluoride-specific ion channel. Important for reducing fluoride concentration in the cell, thus reducing its toxicity. In Rhodopseudomonas palustris (strain BisB18), this protein is Fluoride-specific ion channel FluC 2.